The primary structure comprises 208 residues: Small ribosomal subunit protein uS4 (208 aa).

The segment at 24 to 52 is disordered; the sequence is GVKPFDVKTKKANKAPGQHGQARGGKQSE. Residues 98 to 160 enclose the S4 RNA-binding domain; sequence SRLDNVVYRM…AKQQLRIKNA (63 aa).

It belongs to the universal ribosomal protein uS4 family. Part of the 30S ribosomal subunit. Contacts protein S5. The interaction surface between S4 and S5 is involved in control of translational fidelity.

One of the primary rRNA binding proteins, it binds directly to 16S rRNA where it nucleates assembly of the body of the 30S subunit. Functionally, with S5 and S12 plays an important role in translational accuracy. This is Small ribosomal subunit protein uS4 from Acinetobacter baumannii (strain ATCC 17978 / DSM 105126 / CIP 53.77 / LMG 1025 / NCDC KC755 / 5377).